The primary structure comprises 341 residues: Cell wall mannoprotein PIR1 (341 aa).

The N-terminal stretch at 1–18 (MQYKKSLVASALVTTSLA) is a signal peptide. The propeptide occupies 19-63 (AYAPKDPWSTLTPSATYKGGITDYSSTFGIAVEPIATTASSKAKR). 8 PIR1/2/3 repeats span residues 64–82 (AAAI…TKTT), 83–101 (AAAV…TKTK), 102–120 (AAAV…TKTT), 126–144 (AAAV…TKTK), 145–163 (AAAV…TKTT), 164–182 (AAAV…TKTT), 183–201 (AAAV…TNTT), and 202–220 (VAPV…TLTS).

Belongs to the PIR protein family. Post-translationally, covalently linked to beta-1,3-glucan of the inner cell wall layer via an alkali-sensitive ester linkage between the gamma-carboxyl group of glutamic acids, arising from specific glutamines within the PIR1/2/3 repeats, and hydroxyl groups of glucoses of beta-1,3-glucan chains. In terms of processing, O-glycosylated. Extensively O-mannosylated.

The protein localises to the secreted. It localises to the cell wall. Component of the outer cell wall layer. Required for stability of the cell wall and for optimal growth. Required for resistance against several antifungal and cell wall-perturbing agents and for tolerance to heat shock. This chain is Cell wall mannoprotein PIR1 (PIR1), found in Saccharomyces cerevisiae (strain RM11-1a) (Baker's yeast).